Consider the following 488-residue polypeptide: Proline--tRNA ligase (488 aa).

The protein belongs to the class-II aminoacyl-tRNA synthetase family. ProS type 3 subfamily. In terms of assembly, homodimer.

The protein localises to the cytoplasm. The enzyme catalyses tRNA(Pro) + L-proline + ATP = L-prolyl-tRNA(Pro) + AMP + diphosphate. In terms of biological role, catalyzes the attachment of proline to tRNA(Pro) in a two-step reaction: proline is first activated by ATP to form Pro-AMP and then transferred to the acceptor end of tRNA(Pro). The polypeptide is Proline--tRNA ligase (Borreliella burgdorferi (strain ZS7) (Borrelia burgdorferi)).